Here is a 940-residue protein sequence, read N- to C-terminus: Protein translocase subunit SecA (940 aa).

ATP contacts are provided by residues Gln-85, 103-107 (GEGKT), and Asp-505. The disordered stretch occupies residues 851-940 (PVQDGAERPS…KGGGGRRRKK (90 aa)). The span at 855-865 (GAERPSLEKEG) shows a compositional bias: basic and acidic residues. The segment covering 928–940 (RRRKGGGGRRRKK) has biased composition (basic residues).

Belongs to the SecA family. As to quaternary structure, monomer and homodimer. Part of the essential Sec protein translocation apparatus which comprises SecA, SecYEG and auxiliary proteins SecDF. Other proteins may also be involved.

It is found in the cell membrane. It localises to the cytoplasm. The catalysed reaction is ATP + H2O + cellular proteinSide 1 = ADP + phosphate + cellular proteinSide 2.. Part of the Sec protein translocase complex. Interacts with the SecYEG preprotein conducting channel. Has a central role in coupling the hydrolysis of ATP to the transfer of proteins into and across the cell membrane, serving as an ATP-driven molecular motor driving the stepwise translocation of polypeptide chains across the membrane. The sequence is that of Protein translocase subunit SecA from Streptomyces griseus.